Reading from the N-terminus, the 789-residue chain is Kin of IRRE-like protein 1 (789 aa).

The N-terminal stretch at M1 to A47 is a signal peptide. N5, N78, and N172 each carry an N-linked (GlcNAc...) asparagine glycan. Residues L48–A531 are Extracellular-facing. 5 Ig-like C2-type domains span residues P49–T147, P152–E248, P255–N335, P340–L419, and P424–E520. C74 and C132 are oxidised to a cystine. 2 disulfides stabilise this stretch: C175/C232 and C276/C319. An N-linked (GlcNAc...) asparagine glycan is attached at N329. The cysteines at positions 361 and 403 are disulfide-linked. Residues R437–D439 carry the Cell attachment site motif. C445 and C504 are disulfide-bonded. N-linked (GlcNAc...) asparagine glycosylation is present at N503. Residues G532–L552 form a helical membrane-spanning segment. At Y553–V789 the chain is on the cytoplasmic side. The residue at position 606 (S606) is a Phosphoserine. Phosphotyrosine; by FYN is present on residues Y637 and Y638. Residues Y654 and Y657 each carry the phosphotyrosine modification. The segment at R687 to Q713 is disordered. Low complexity predominate over residues G694 to S712. Y756 is subject to Phosphotyrosine.

It belongs to the immunoglobulin superfamily. Interacts with TJP1/ZO-1 and with NPHS2/podocin (via the C-terminus). Interacts with NPHS1/nephrin (via the Ig-like domains); this interaction is dependent on KIRREL1 glycosylation. Homodimer (via the Ig-like domains). Interacts when tyrosine-phosphorylated with GRB2. Post-translationally, phosphorylation probably regulates the interaction with NPHS2. Phosphorylated at Tyr-637 and Tyr-638 by FYN, leading to GRB2 binding. N-glycosylated.

It localises to the cell membrane. Functionally, required for proper function of the glomerular filtration barrier. It is involved in the maintenance of a stable podocyte architecture with interdigitating foot processes connected by specialized cell-cell junctions, known as the slit diaphragm. It is a signaling protein that needs the presence of TEC kinases to fully trans-activate the transcription factor AP-1. The polypeptide is Kin of IRRE-like protein 1 (Kirrel1) (Rattus norvegicus (Rat)).